Consider the following 654-residue polypeptide: Spindle assembly abnormal protein 6 homolog (654 aa).

One can recognise a PISA domain in the interval 39 to 91; the sequence is VHRKDLVIRLTDDTDPFFLYNLVISEEDFQSLKLQQGLLVDFLAFPQKFIDLL. Residues 175-471 adopt a coiled-coil conformation; the sequence is TRQLHITQET…QLLKNNEKLI (297 aa). At S509 the chain carries Phosphoserine. The interval 568–589 is disordered; the sequence is ASIDGQPGAAVNRPCSNDKENG. Position 612 is a phosphoserine (S612). Low complexity predominate over residues 634 to 644; sequence SKPTVLPSSSS. The segment at 634–654 is disordered; that stretch reads SKPTVLPSSSSAYFPGQLPSS. S654 is subject to Phosphoserine.

In terms of assembly, nine homodimers form a cartwheel structure with an internal diameter of 23 nm and radial spokes connecting to the microtubule triplets. Forms a complex with CPAP and STIL. Interacts with FBXW5. Interacts with NUP62 and TUBG1 at the centrosome. Interacts with CENATAC; the interaction increases with CENATAC acetylation. Interacts with FZR1; the interaction is regulated by CENATAC and leads to SASS6 proteasomal degradation. In terms of processing, ubiquitinated by the SCF(FBXW5) E3 ubiquitin-protein ligase complex during S phase, leading to its degradation and preventing centriole reduplication. Ubiquitinated by the anaphase promoting complex/cyclosome (APC/C) E3 ubiquitin-protein ligase complex, leading to its degradation and preventing centriole reduplication.

It is found in the cytoplasm. The protein resides in the cytoskeleton. It localises to the microtubule organizing center. The protein localises to the centrosome. Its subcellular location is the centriole. Central scaffolding component of the centrioles ensuring their 9-fold symmetry. Required for centrosome biogenesis and duplication. Required both for mother-centriole-dependent centriole duplication and deuterosome-dependent centriole amplification in multiciliated cells. Not required for centriole formation in embryonic stem cells but necessary to maintain centriole architecture. Required for the recruitment of STIL to the procentriole and for STIL-mediated centriole amplification. In Mus musculus (Mouse), this protein is Spindle assembly abnormal protein 6 homolog.